The following is a 512-amino-acid chain: MTIVLNPGKVTLNQLEAIYWNGEVSKLHNDTHLAIRKGADRIAEIAAGSQPVYGINTGFGKLASIKIDANDVAVLQRNLILSHCCAVGAPLAENIVRLMMTLKLISLGRGASGVRLELVHLLESMLAKGVIPVIPEKGSVGASGDLAPLAHMVAVMIGEGEAFFQNIRMSGAAALEKARLFPITLEAKEGLALINGTQTSTALALAGLFQGYRALCGGLLAGALTTDAVMGSTAPFHPDIHILRGHYGQIVVSQTLEKLIKDSEIRAAHLCDDDHRVQDPYCIRCQPQVMGACFDVLVAAAKTLIIEANAVTDNPLILSNGEVVSGGNFHAEPVAFSADQIALALCEIGSISQRRIALMVDPTVSCGLPPFLAQNAGLNSGFMIAEITAAALMSENKQMAHPASVDSTPTSANQEDHVSMACHGARRLLAMNENLFTIIGIETLAAAQGIEYRAPLKTSSLLQSVMKRLRKNIDTLKVDRYLAPDLHKAHILVREGHLLSVLPEIFPRLEPQ.

The segment at residues 142-144 is a cross-link (5-imidazolinone (Ala-Gly)); sequence ASG. A 2,3-didehydroalanine (Ser) modification is found at serine 143.

It belongs to the PAL/histidase family. Post-translationally, contains an active site 4-methylidene-imidazol-5-one (MIO), which is formed autocatalytically by cyclization and dehydration of residues Ala-Ser-Gly.

It is found in the cytoplasm. It catalyses the reaction L-histidine = trans-urocanate + NH4(+). It participates in amino-acid degradation; L-histidine degradation into L-glutamate; N-formimidoyl-L-glutamate from L-histidine: step 1/3. The protein is Histidine ammonia-lyase of Bartonella quintana (strain Toulouse) (Rochalimaea quintana).